The primary structure comprises 629 residues: tRNA uridine 5-carboxymethylaminomethyl modification enzyme MnmG (629 aa).

11-16 serves as a coordination point for FAD; it reads GGGHAG. NAD(+) is bound at residue 273–287; the sequence is GPRYCPSFEDKAVRF.

This sequence belongs to the MnmG family. As to quaternary structure, homodimer. Heterotetramer of two MnmE and two MnmG subunits. Requires FAD as cofactor.

It is found in the cytoplasm. In terms of biological role, NAD-binding protein involved in the addition of a carboxymethylaminomethyl (cmnm) group at the wobble position (U34) of certain tRNAs, forming tRNA-cmnm(5)s(2)U34. This is tRNA uridine 5-carboxymethylaminomethyl modification enzyme MnmG from Mycoplasma mycoides subsp. mycoides SC (strain CCUG 32753 / NCTC 10114 / PG1).